Here is an 81-residue protein sequence, read N- to C-terminus: Sec-independent protein translocase protein TatA (81 aa).

Residues 1-21 traverse the membrane as a helical segment; that stretch reads MGGISIWQLLIVALIVILLFG. Residues 34 to 81 form a disordered region; that stretch reads GAVKGFKNAMTPEDENKSLDDKEKDQTAATSQQAAEKQPETESKDKQA. Basic and acidic residues-rich tracts occupy residues 47–59 and 70–81; these read DENKSLDDKEKDQ and KQPETESKDKQA.

This sequence belongs to the TatA/E family. The Tat system comprises two distinct complexes: a TatABC complex, containing multiple copies of TatA, TatB and TatC subunits, and a separate TatA complex, containing only TatA subunits. Substrates initially bind to the TatABC complex, which probably triggers association of the separate TatA complex to form the active translocon.

The protein localises to the cell inner membrane. In terms of biological role, part of the twin-arginine translocation (Tat) system that transports large folded proteins containing a characteristic twin-arginine motif in their signal peptide across membranes. TatA could form the protein-conducting channel of the Tat system. This Shewanella frigidimarina (strain NCIMB 400) protein is Sec-independent protein translocase protein TatA.